A 220-amino-acid chain; its full sequence is Ribosomal RNA large subunit methyltransferase E (220 aa).

S-adenosyl-L-methionine-binding residues include Gly60, Trp62, Asp92, Asp108, and Asp133. Lys173 (proton acceptor) is an active-site residue.

It belongs to the class I-like SAM-binding methyltransferase superfamily. RNA methyltransferase RlmE family.

The protein localises to the cytoplasm. It carries out the reaction uridine(2552) in 23S rRNA + S-adenosyl-L-methionine = 2'-O-methyluridine(2552) in 23S rRNA + S-adenosyl-L-homocysteine + H(+). Specifically methylates the uridine in position 2552 of 23S rRNA at the 2'-O position of the ribose in the fully assembled 50S ribosomal subunit. The polypeptide is Ribosomal RNA large subunit methyltransferase E (Burkholderia multivorans (strain ATCC 17616 / 249)).